Consider the following 588-residue polypeptide: Aspartate--tRNA ligase (588 aa).

Residue Glu-174 participates in L-aspartate binding. The segment at Gln-198–Lys-201 is aspartate. Position 220 (Arg-220) interacts with L-aspartate. Residues Arg-220–Glu-222 and Gln-229 contribute to the ATP site. His-448 lines the L-aspartate pocket. ATP is bound at residue Glu-482. Arg-489 is an L-aspartate binding site. Gly-534–Arg-537 contacts ATP.

The protein belongs to the class-II aminoacyl-tRNA synthetase family. Type 1 subfamily. In terms of assembly, homodimer.

Its subcellular location is the cytoplasm. The enzyme catalyses tRNA(Asp) + L-aspartate + ATP = L-aspartyl-tRNA(Asp) + AMP + diphosphate. Its function is as follows. Catalyzes the attachment of L-aspartate to tRNA(Asp) in a two-step reaction: L-aspartate is first activated by ATP to form Asp-AMP and then transferred to the acceptor end of tRNA(Asp). This Xanthomonas campestris pv. campestris (strain 8004) protein is Aspartate--tRNA ligase.